We begin with the raw amino-acid sequence, 105 residues long: Small ribosomal subunit protein uS10c (105 aa).

The protein belongs to the universal ribosomal protein uS10 family. Part of the 30S ribosomal subunit.

The protein localises to the plastid. It is found in the cyanelle. In terms of biological role, involved in the binding of tRNA to the ribosomes. This is Small ribosomal subunit protein uS10c (rps10) from Cyanophora paradoxa.